Here is a 309-residue protein sequence, read N- to C-terminus: Transcription initiation factor IIB 1 (309 aa).

2 tandem repeats follow at residues 125–208 and 219–300.

It belongs to the TFIIB family.

In terms of biological role, stabilizes TBP binding to an archaeal box-A promoter. Also responsible for recruiting RNA polymerase II to the pre-initiation complex (DNA-TBP-TFIIB). In Saccharolobus solfataricus (strain ATCC 35092 / DSM 1617 / JCM 11322 / P2) (Sulfolobus solfataricus), this protein is Transcription initiation factor IIB 1.